Here is a 128-residue protein sequence, read N- to C-terminus: UPF0102 protein Mext_0406 (128 aa).

The protein belongs to the UPF0102 family.

This is UPF0102 protein Mext_0406 from Methylorubrum extorquens (strain PA1) (Methylobacterium extorquens).